Here is a 545-residue protein sequence, read N- to C-terminus: Chaperonin GroEL (545 aa).

Residues 29 to 32 (TLGP), K50, 86 to 90 (DGTTT), G413, 479 to 481 (NAA), and D496 contribute to the ATP site. A disordered region spans residues 525–545 (KPEKEKAPAAAGAPDMGGMDF). Low complexity predominate over residues 532 to 545 (PAAAGAPDMGGMDF).

It belongs to the chaperonin (HSP60) family. In terms of assembly, forms a cylinder of 14 subunits composed of two heptameric rings stacked back-to-back. Interacts with the co-chaperonin GroES.

Its subcellular location is the cytoplasm. The catalysed reaction is ATP + H2O + a folded polypeptide = ADP + phosphate + an unfolded polypeptide.. Functionally, together with its co-chaperonin GroES, plays an essential role in assisting protein folding. The GroEL-GroES system forms a nano-cage that allows encapsulation of the non-native substrate proteins and provides a physical environment optimized to promote and accelerate protein folding. The chain is Chaperonin GroEL from Deinococcus geothermalis (strain DSM 11300 / CIP 105573 / AG-3a).